The following is a 141-amino-acid chain: ATP synthase F(0) complex subunit C2, mitochondrial (141 aa).

A mitochondrion-targeting transit peptide spans Met-1–Arg-66. Residues Val-82 to Tyr-102 form a helical membrane-spanning segment. Lys-109 carries the post-translational modification N6,N6,N6-trimethyllysine. The helical transmembrane segment at Ile-117–Ile-137 threads the bilayer.

Belongs to the ATPase C chain family. In terms of assembly, F-type ATPases have 2 components, CF(1) - the catalytic core - and CF(0) - the membrane proton channel. CF(1) has five subunits: alpha(3), beta(3), gamma(1), delta(1), epsilon(1). CF(0) has three main subunits: a, b and c. Interacts with DNAJC30; interaction is direct. In terms of processing, trimethylated by ATPSCKMT at Lys-109. Methylation is required for proper incorporation of the C subunit into the ATP synthase complex and mitochondrial respiration.

The protein localises to the mitochondrion membrane. Its function is as follows. Mitochondrial membrane ATP synthase (F(1)F(0) ATP synthase or Complex V) produces ATP from ADP in the presence of a proton gradient across the membrane which is generated by electron transport complexes of the respiratory chain. F-type ATPases consist of two structural domains, F(1) - containing the extramembraneous catalytic core and F(0) - containing the membrane proton channel, linked together by a central stalk and a peripheral stalk. During catalysis, ATP synthesis in the catalytic domain of F(1) is coupled via a rotary mechanism of the central stalk subunits to proton translocation. Part of the complex F(0) domain. A homomeric c-ring of probably 10 subunits is part of the complex rotary element. This is ATP synthase F(0) complex subunit C2, mitochondrial from Rattus norvegicus (Rat).